The primary structure comprises 220 residues: Small ribosomal subunit protein uS2 (220 aa).

The protein belongs to the universal ribosomal protein uS2 family.

The protein is Small ribosomal subunit protein uS2 of Methanococcus maripaludis (strain C5 / ATCC BAA-1333).